A 1086-amino-acid chain; its full sequence is MRIFTLGKGRISRGYARQVNPSLFAKYSYCIANNPWYFILVFTLLSITGIYSSLVAYQQSLYDQSLARWSAWYAESINAEANVITKQLYLLGTNTSVFSEDYLSNAYRWETSFHQYLAEYGYPCIRDEKSCVTISPIPKYYGKVDPVAQYSYTKGLPENEREVNKLRNDTIAEGFDSLSAFVITYFLKPEQVDTFHVVLKKFISETPNLYASLLDTSPTTVVARIPDLTVIYRWYLWVGFGVGLFAYLYLSLVRLHDIRAKFGLTATIFIQSGTAYFSTCSLLYFFERTGPICPWPMAYYIIIFMDIENSFRLLRAVIASPQTKRVPSRIMEGFSSTIIASFSSLLKKLLTLFVLSFFVYPLVQEFCLFLACSFVVSFLLHGSFFLAVLSVDIRRLELQDFLDSNSSNRNSKWWVPYLEYVRFMWSPWIIDNLGTVSFHMYVIYLQLQSSTDINGSWRLASPNIRFLITLYHRLGRILRERKLFPLITTGWFGDPTFLEALKEKTMAENLVIALYRPVILDTVNRRDYTNVYNSFHDRRVWRWSTFFSILFAIDFAVGLLVKALLRGWSDHDELSTDTTLHEEKFRIEPVPVHHQLDILKIAVSENYKTFASVGLDRCLVVWDLRQWCTKLVLSKEQMPRTLKAIALDPQGNYVSLFSKDTLFILNVESPCLMLQHSYHCKPNSKLNVFWMPGTHKDDEWKNFELVVVESSGEIQVFSLTIEIEGADIALVEKFQLSSPIIKSISIVSPTANRIACLTESGEVTVYSKKGPVWSPKILSQNKNYLTETKKDIYGIAMADILFLARDSGVDMIDLKNDELLHSFTLPPIKVNTFSVGVSNSRFVNGQFRVSSISFCFTHAVTEKVLYYYYGNECNESYIILNKWDQQPNLVDVHDPDNSLACLTFDELQENIHEVEDASECVMSSDGLYIFGMRRKSSSGICPTADEKNEDNGFTLRNRKLRTGHYNWTSYVPLLDSYMQDMEHKKNTHSGGETQVWEVWMYSQSEKKHRCKSLKMYNSLIIADPGPSLAVSDRCVAIVLGNYVALVGYGSEIFRDFYQIRNSDEMDRILRRKRKNLQRKRSGTIGC.

Topologically, residues 1 to 35 are cytoplasmic; sequence MRIFTLGKGRISRGYARQVNPSLFAKYSYCIANNP. A helical membrane pass occupies residues 36–56; the sequence is WYFILVFTLLSITGIYSSLVA. Over 57–229 the chain is Lumenal; sequence YQQSLYDQSL…TVVARIPDLT (173 aa). 2 N-linked (GlcNAc...) asparagine glycosylation sites follow: Asn94 and Asn168. The chain crosses the membrane as a helical span at residues 230-250; the sequence is VIYRWYLWVGFGVGLFAYLYL. In terms of domain architecture, SSD spans 233–391; the sequence is RWYLWVGFGV…GSFFLAVLSV (159 aa). The Cytoplasmic portion of the chain corresponds to 251 to 265; sequence SLVRLHDIRAKFGLT. The helical transmembrane segment at 266-286 threads the bilayer; the sequence is ATIFIQSGTAYFSTCSLLYFF. At 287 to 290 the chain is on the lumenal side; that stretch reads ERTG. A helical transmembrane segment spans residues 291–311; the sequence is PICPWPMAYYIIIFMDIENSF. At 312 to 337 the chain is on the cytoplasmic side; sequence RLLRAVIASPQTKRVPSRIMEGFSST. Residues 338-358 traverse the membrane as a helical segment; that stretch reads IIASFSSLLKKLLTLFVLSFF. The Lumenal portion of the chain corresponds to 359 to 367; sequence VYPLVQEFC. The helical transmembrane segment at 368 to 388 threads the bilayer; the sequence is LFLACSFVVSFLLHGSFFLAV. Over 389–422 the chain is Cytoplasmic; sequence LSVDIRRLELQDFLDSNSSNRNSKWWVPYLEYVR. Residues 396–401 carry the ER export signal motif; that stretch reads LELQDF. Residues 423 to 443 form a helical membrane-spanning segment; sequence FMWSPWIIDNLGTVSFHMYVI. At 444-544 the chain is on the lumenal side; that stretch reads YLQLQSSTDI…FHDRRVWRWS (101 aa). Asn454 carries N-linked (GlcNAc...) asparagine glycosylation. A helical transmembrane segment spans residues 545–565; it reads TFFSILFAIDFAVGLLVKALL. The Cytoplasmic portion of the chain corresponds to 566–1086; the sequence is RGWSDHDELS…QRKRSGTIGC (521 aa). 5 WD repeats span residues 593–632, 637–675, 680–727, 736–776, and 963–1009; these read HHQLDILKIAVSENYKTFASVGLDRCLVVWDLRQWCTKLV, QMPRTLKAIALDPQGNYVSLFSKDTLFILNVESPCLMLQ, CKPN…EGAD, LSSP…WSPK, and GHYN…KKHR. The interval 640–1086 is interaction with sre1; sequence RTLKAIALDP…QRKRSGTIGC (447 aa).

It belongs to the WD repeat SCAP family. Forms a tight complex with scp1, composed of 4 copies of scp1 and 4 copies of sre1.

It localises to the endoplasmic reticulum membrane. The protein localises to the golgi apparatus membrane. In terms of biological role, escort protein required for sre1 processing at low sterol as well as oxygen levels. May regulate export of the scp1/sre1 complex from the ER at low sterol or oxygen levels. 4-methyl sterols bound to scp1 may mask an ER export signal in scp1 leading to retention of the complex in the ER. Release of 4-methyl sterols may trigger a conformational change in the SSD domain of scp1 unmasking the ER export signal leading to recruitment into COPII-coated vesicles, transport to the Golgi complex, proteolytic cleavage of sre1 in the Golgi, release of the transcription factor fragment of sre1 from the membrane, its import into the nucleus and up-regulation of genes required for ergosterol biosynthesis as well as anaerobic growth. Binds 4-methyl sterols. The polypeptide is Sterol regulatory element-binding protein cleavage-activating protein (Schizosaccharomyces pombe (strain 972 / ATCC 24843) (Fission yeast)).